The chain runs to 257 residues: Anamorsin homolog (257 aa).

The interval 1–132 (MSVLALDVAR…ARGTAFALKS (132 aa)) is N-terminal SAM-like domain. The tract at residues 133–171 (RAVRVNATAADAADAWGASAAADDDELIDESALLTELDV) is linker. [2Fe-2S] cluster is bound by residues cysteine 181, cysteine 190, cysteine 193, and cysteine 195. Residues 181–195 (CDVGAGKKACKNCTC) form a fe-S binding site A region. Cysteine 219, cysteine 222, cysteine 230, and cysteine 233 together coordinate [4Fe-4S] cluster. 2 consecutive short sequence motifs (cx2C motif) follow at residues 219-222 (CGNC) and 230-233 (CAGC). The segment at 219–233 (CGNCALGDAFRCAGC) is fe-S binding site B.

This sequence belongs to the anamorsin family. Monomer. [2Fe-2S] cluster serves as cofactor. [4Fe-4S] cluster is required as a cofactor.

Its subcellular location is the cytoplasm. It is found in the mitochondrion intermembrane space. Component of the cytosolic iron-sulfur (Fe-S) protein assembly (CIA) machinery. Required for the maturation of extramitochondrial Fe-S proteins. Part of an electron transfer chain functioning in an early step of cytosolic Fe-S biogenesis, facilitating the de novo assembly of a [4Fe-4S] cluster on the cytosolic Fe-S scaffold complex. Electrons are transferred from NADPH via a FAD- and FMN-containing diflavin oxidoreductase. Together with the diflavin oxidoreductase, also required for the assembly of the diferric tyrosyl radical cofactor of ribonucleotide reductase (RNR), probably by providing electrons for reduction during radical cofactor maturation in the catalytic small subunit. In Ostreococcus lucimarinus (strain CCE9901), this protein is Anamorsin homolog.